The following is an 835-amino-acid chain: Leucine--tRNA ligase (835 aa).

Residues 36–46 (PYPSGKIHVGH) carry the 'HIGH' region motif. Residues 602–606 (KMSKS) carry the 'KMSKS' region motif. An ATP-binding site is contributed by lysine 605.

Belongs to the class-I aminoacyl-tRNA synthetase family.

The protein resides in the cytoplasm. The enzyme catalyses tRNA(Leu) + L-leucine + ATP = L-leucyl-tRNA(Leu) + AMP + diphosphate. The chain is Leucine--tRNA ligase from Rickettsia felis (strain ATCC VR-1525 / URRWXCal2) (Rickettsia azadi).